The chain runs to 360 residues: S-adenosylmethionine:tRNA ribosyltransferase-isomerase (360 aa).

Belongs to the QueA family. In terms of assembly, monomer.

It is found in the cytoplasm. The enzyme catalyses 7-aminomethyl-7-carbaguanosine(34) in tRNA + S-adenosyl-L-methionine = epoxyqueuosine(34) in tRNA + adenine + L-methionine + 2 H(+). The protein operates within tRNA modification; tRNA-queuosine biosynthesis. In terms of biological role, transfers and isomerizes the ribose moiety from AdoMet to the 7-aminomethyl group of 7-deazaguanine (preQ1-tRNA) to give epoxyqueuosine (oQ-tRNA). This chain is S-adenosylmethionine:tRNA ribosyltransferase-isomerase, found in Rhodopseudomonas palustris (strain ATCC BAA-98 / CGA009).